The sequence spans 489 residues: MFEHDFLALFPEIFLINATIILLIYGVVFSTSKKYDYPPLVRNVGWLGLLSVLITILLVAVGSPLAVANLVYNNLIIDNFTYFCQIFLLLSTASTMVMCLDYFKQESLNAFESIVLILLSTCSMLFMISAYDLIAMYLAIELQSLCFYVIAASKRDSEFSTEAGLKYFILGAFSSGILLFGCSMIYGFTGVTNFEELAKIFTGYEITLFGAQSSGIFMGILFIAVGFLFKITAVPFHMWAPDVYEGSPTIVTAFFSIAPKISILANMLRVFIYSFYDPTWQQLFFFCSIASMILGALAAMAQNKVKRLLAYSSIGHVGYLLIGFSCGTIEGIQSLLIGIFIYVLMTVNVFAIVLALRQNRFKYIADLGALAKTNPILAITLSITMFSYAGIPPLAGFCSKFYLFFAALGCGAYLLALIGVVTSVISCFYYIRFVKIMYFDTPKTWVLYKPMDREKSLLLAITVFFITFFFLYPSPLFLVTHQMALCLCL.

13 consecutive transmembrane segments (helical) span residues 9–29, 47–67, 80–100, 114–134, 168–188, 216–236, 248–268, 280–300, 309–329, 335–355, 376–396, 401–421, and 459–479; these read LFPE…GVVF, LGLL…PLAV, FTYF…VMCL, IVLI…YDLI, FILG…IYGF, IFMG…AVPF, PTIV…ANML, WQQL…LAAM, LAYS…CGTI, LLIG…IVLA, ILAI…PLAG, FYLF…IGVV, and LAIT…LFLV.

The protein belongs to the complex I subunit 2 family.

The protein localises to the mitochondrion inner membrane. The catalysed reaction is a ubiquinone + NADH + 5 H(+)(in) = a ubiquinol + NAD(+) + 4 H(+)(out). Functionally, core subunit of the mitochondrial membrane respiratory chain NADH dehydrogenase (Complex I) that is believed to belong to the minimal assembly required for catalysis. Complex I functions in the transfer of electrons from NADH to the respiratory chain. The immediate electron acceptor for the enzyme is believed to be ubiquinone. This Marchantia polymorpha (Common liverwort) protein is NADH-ubiquinone oxidoreductase chain 2 (ND2).